The chain runs to 306 residues: Erythromycin 3''-O-methyltransferase (306 aa).

The S-adenosyl-L-methionine site is built by Leu157 and His162.

This sequence belongs to the methyltransferase superfamily.

It catalyses the reaction erythromycin C + S-adenosyl-L-methionine = erythromycin A + S-adenosyl-L-homocysteine + H(+). The enzyme catalyses erythromycin D + S-adenosyl-L-methionine = erythromycin B + S-adenosyl-L-homocysteine + H(+). The protein operates within antibiotic biosynthesis; erythromycin biosynthesis. Its function is as follows. S-adenosyl-L-methionine-dependent O-methyltransferase that catalyzes the last step in the erythromycin biosynthesis pathway. Methylates the position 3 of the mycarosyl moiety of erythromycin C, forming the most active form of the antibiotic, erythromycin A. Can also methylate the precursor erythromycin D, forming erythromycin B. This is Erythromycin 3''-O-methyltransferase (eryG) from Saccharopolyspora erythraea (strain ATCC 11635 / DSM 40517 / JCM 4748 / NBRC 13426 / NCIMB 8594 / NRRL 2338).